The following is a 40-amino-acid chain: U2-myrmicitoxin-Tb1a (40 aa).

Residues A1–A3 form the signal peptide. The propeptide occupies M4 to A29. Arginine amide is present on R39.

This sequence belongs to the formicidae venom precursor-01 superfamily. As to expression, expressed by the venom gland.

It localises to the secreted. Venom protein with unknown function. Does not induce paralysis when a high dose is administered by intrathoracic injection into the blowfly Lucilia caesar. The sequence is that of U2-myrmicitoxin-Tb1a from Tetramorium bicarinatum (Tramp ant).